Reading from the N-terminus, the 213-residue chain is uncharacterized protein (213 aa).

This is an uncharacterized protein from Escherichia coli (strain K12).